The primary structure comprises 325 residues: Putative aryl-alcohol dehydrogenase C750.01 (325 aa).

The protein belongs to the aldo/keto reductase family. Aldo/keto reductase 2 subfamily.

The chain is Putative aryl-alcohol dehydrogenase C750.01 from Schizosaccharomyces pombe (strain 972 / ATCC 24843) (Fission yeast).